We begin with the raw amino-acid sequence, 154 residues long: Myoglobin (154 aa).

Residues 2-148 enclose the Globin domain; sequence GLSDDEWNHV…FRNDMASKYK (147 aa). Histidine 65 is a binding site for nitrite. Histidine 65 lines the O2 pocket. Histidine 94 is a binding site for heme b.

It belongs to the globin family. As to quaternary structure, monomeric.

The protein localises to the cytoplasm. It localises to the sarcoplasm. The catalysed reaction is Fe(III)-heme b-[protein] + nitric oxide + H2O = Fe(II)-heme b-[protein] + nitrite + 2 H(+). It carries out the reaction H2O2 + AH2 = A + 2 H2O. Its function is as follows. Monomeric heme protein which primary function is to store oxygen and facilitate its diffusion within muscle tissues. Reversibly binds oxygen through a pentacoordinated heme iron and enables its timely and efficient release as needed during periods of heightened demand. Depending on the oxidative conditions of tissues and cells, and in addition to its ability to bind oxygen, it also has a nitrite reductase activity whereby it regulates the production of bioactive nitric oxide. Under stress conditions, like hypoxia and anoxia, it also protects cells against reactive oxygen species thanks to its pseudoperoxidase activity. The polypeptide is Myoglobin (MB) (Chelonia mydas (Green sea-turtle)).